Reading from the N-terminus, the 215-residue chain is Redox-sensing transcriptional repressor Rex (215 aa).

The segment at residues 18-57 is a DNA-binding region (H-T-H motif); that stretch reads LYYRFLKNLHASGKQRVSSAELSDAVKVDSATIRRDFSYF. Residue 92–97 participates in NAD(+) binding; it reads GVGNLG.

The protein belongs to the transcriptional regulatory Rex family. Homodimer.

The protein localises to the cytoplasm. Modulates transcription in response to changes in cellular NADH/NAD(+) redox state. This Bacillus velezensis (strain DSM 23117 / BGSC 10A6 / LMG 26770 / FZB42) (Bacillus amyloliquefaciens subsp. plantarum) protein is Redox-sensing transcriptional repressor Rex.